The following is a 214-amino-acid chain: Orotate phosphoribosyltransferase (214 aa).

Lys-26 lines the 5-phospho-alpha-D-ribose 1-diphosphate pocket. 34-35 (FF) lines the orotate pocket. 5-phospho-alpha-D-ribose 1-diphosphate is bound by residues 72–73 (YK), Arg-99, Lys-100, Lys-103, His-105, and 124–132 (DDVITAGTA). The orotate site is built by Thr-128 and Arg-156.

The protein belongs to the purine/pyrimidine phosphoribosyltransferase family. PyrE subfamily. Homodimer. Mg(2+) serves as cofactor.

The catalysed reaction is orotidine 5'-phosphate + diphosphate = orotate + 5-phospho-alpha-D-ribose 1-diphosphate. The protein operates within pyrimidine metabolism; UMP biosynthesis via de novo pathway; UMP from orotate: step 1/2. Functionally, catalyzes the transfer of a ribosyl phosphate group from 5-phosphoribose 1-diphosphate to orotate, leading to the formation of orotidine monophosphate (OMP). This is Orotate phosphoribosyltransferase from Actinobacillus succinogenes (strain ATCC 55618 / DSM 22257 / CCUG 43843 / 130Z).